Here is a 297-residue protein sequence, read N- to C-terminus: MNAPAPKPGLVIVDKPAGMTSHDVVSKLRRAFSTRKVGHAGTLDPMATGVLVVGIERGTRFLAHMVASTKAYDATIRLGAATSTDDAEGEVISTTDASGLDHSTILAEIVNLTGDIMQKPTKVSAIKIDGKRAHERVRDGEEVDIPARPVTVSVFDVLDYHVDGEFYDLDVRVHCSSGTYIRALARDLGNALQVGGHLTALRRTEVGPFTLNDATPLSKLQENPELSLNLDQALTRSYPVLDITEDEGVDLSMGKWLEPRGLKGVHAAVTPSGKAVALIEEKGKRLATVFVAHPNTL.

Residue Asp-44 is the Nucleophile of the active site.

Belongs to the pseudouridine synthase TruB family. Type 1 subfamily.

It catalyses the reaction uridine(55) in tRNA = pseudouridine(55) in tRNA. Functionally, responsible for synthesis of pseudouridine from uracil-55 in the psi GC loop of transfer RNAs. The protein is tRNA pseudouridine synthase B of Corynebacterium glutamicum (strain ATCC 13032 / DSM 20300 / JCM 1318 / BCRC 11384 / CCUG 27702 / LMG 3730 / NBRC 12168 / NCIMB 10025 / NRRL B-2784 / 534).